The sequence spans 603 residues: F-box only protein 46 (603 aa).

A disordered region spans residues 20–63 (YSQNQPRPPSAALKPSACPEPGGGAEPDHGPAHSENTPPALATE). A phosphoserine; by ATM mark is found at serine 21 and serine 67. 4 disordered regions span residues 111-163 (GGSR…PASA), 235-301 (EAQR…ARAK), 326-360 (LLARADEASEGDSPAPARPEDTPPAPPPPPARDCG), and 396-440 (TVSP…AEGT). Low complexity predominate over residues 152–163 (GPPAAEEGPASA). Serine 338 carries the post-translational modification Phosphoserine. Threonine 347 carries the phosphothreonine modification. Pro residues-rich tracts occupy residues 347–356 (TPPAPPPPPA) and 417–426 (DGPPEPPPAD). Positions 470 to 522 (RQYMLLLPEHVLVKIFSFLPTRALAALKCTCHHFKGIIEAFGVRATDSRWSRD) constitute an F-box domain.

As to quaternary structure, part of a SCF (SKP1-cullin-F-box) protein ligase complex SCF(FBXO46) composed of CUL1, SKP1, RBX1 and FBXO46. Phosphorylated by ATM in response to DNA damage, promoting ubiquitination and degradation by the SCF(FBXO31) complex. Post-translationally, ATM-phosphorylated FBXO46 is ubiquitinated and degradaded by the SCF(FBXO31) complex in response to DNA damage.

The protein operates within protein modification; protein ubiquitination. Its function is as follows. Substrate-recognition component of the SCF(FBXO46) protein ligase complex, which mediates the ubiquitination and degradation of target proteins. In absence of stress, the SCF(FBXO46) complex catalyzes ubiquitination and degradation of MTOR-phosphorylated FBXO31. This Homo sapiens (Human) protein is F-box only protein 46.